The primary structure comprises 204 residues: uncharacterized protein (204 aa).

Cys52 serves as the catalytic Acyl-thioester intermediate. Active-site residues include His89 and Asp104.

This sequence belongs to the arylamine N-acetyltransferase family.

This is an uncharacterized protein from Acanthamoeba polyphaga mimivirus (APMV).